Reading from the N-terminus, the 383-residue chain is tRNA-specific 2-thiouridylase MnmA (383 aa).

ATP-binding positions include 9-16 (GMSGGVDS) and Met35. Positions 95 to 97 (NPD) are interaction with target base in tRNA. Cys100 serves as the catalytic Nucleophile. Cysteines 100 and 196 form a disulfide. Gly124 is an ATP binding site. Residues 146–148 (KDQ) form an interaction with tRNA region. Cys196 (cysteine persulfide intermediate) is an active-site residue. An interaction with tRNA region spans residues 308 to 309 (RY).

Belongs to the MnmA/TRMU family.

The protein resides in the cytoplasm. It carries out the reaction S-sulfanyl-L-cysteinyl-[protein] + uridine(34) in tRNA + AH2 + ATP = 2-thiouridine(34) in tRNA + L-cysteinyl-[protein] + A + AMP + diphosphate + H(+). Its function is as follows. Catalyzes the 2-thiolation of uridine at the wobble position (U34) of tRNA, leading to the formation of s(2)U34. This Burkholderia lata (strain ATCC 17760 / DSM 23089 / LMG 22485 / NCIMB 9086 / R18194 / 383) protein is tRNA-specific 2-thiouridylase MnmA.